The following is a 162-amino-acid chain: Nucleotide-binding protein ACIAD3137 (162 aa).

Belongs to the YajQ family.

In terms of biological role, nucleotide-binding protein. This chain is Nucleotide-binding protein ACIAD3137, found in Acinetobacter baylyi (strain ATCC 33305 / BD413 / ADP1).